A 122-amino-acid chain; its full sequence is UPF0102 protein Cgl2031/cg2228 (122 aa).

This sequence belongs to the UPF0102 family.

The sequence is that of UPF0102 protein Cgl2031/cg2228 from Corynebacterium glutamicum (strain ATCC 13032 / DSM 20300 / JCM 1318 / BCRC 11384 / CCUG 27702 / LMG 3730 / NBRC 12168 / NCIMB 10025 / NRRL B-2784 / 534).